The sequence spans 256 residues: Thiazole synthase (256 aa).

The Schiff-base intermediate with DXP role is filled by Lys-96. Residues Gly-157, 183–184 (AG), and 205–206 (NT) contribute to the 1-deoxy-D-xylulose 5-phosphate site.

Belongs to the ThiG family. As to quaternary structure, homotetramer. Forms heterodimers with either ThiH or ThiS.

It localises to the cytoplasm. The catalysed reaction is [ThiS sulfur-carrier protein]-C-terminal-Gly-aminoethanethioate + 2-iminoacetate + 1-deoxy-D-xylulose 5-phosphate = [ThiS sulfur-carrier protein]-C-terminal Gly-Gly + 2-[(2R,5Z)-2-carboxy-4-methylthiazol-5(2H)-ylidene]ethyl phosphate + 2 H2O + H(+). Its pathway is cofactor biosynthesis; thiamine diphosphate biosynthesis. Functionally, catalyzes the rearrangement of 1-deoxy-D-xylulose 5-phosphate (DXP) to produce the thiazole phosphate moiety of thiamine. Sulfur is provided by the thiocarboxylate moiety of the carrier protein ThiS. In vitro, sulfur can be provided by H(2)S. In Bacillus anthracis, this protein is Thiazole synthase.